The chain runs to 102 residues: Large ribosomal subunit protein mL63 (102 aa).

It belongs to the mitochondrion-specific ribosomal protein mL63 family. In terms of assembly, component of the mitochondrial large ribosomal subunit (mt-LSU). Mature mammalian 55S mitochondrial ribosomes consist of a small (28S) and a large (39S) subunit. The 28S small subunit contains a 12S ribosomal RNA (12S mt-rRNA) and 30 different proteins. The 39S large subunit contains a 16S rRNA (16S mt-rRNA), a copy of mitochondrial valine transfer RNA (mt-tRNA(Val)), which plays an integral structural role, and 52 different proteins.

It is found in the mitochondrion. This Homo sapiens (Human) protein is Large ribosomal subunit protein mL63 (MRPL57).